A 545-amino-acid chain; its full sequence is Capsular polysaccharide phosphotransferase SacB (545 aa).

Belongs to the stealth family.

In terms of biological role, may be the polymerase that links individual UDP-N-acetyl-D-mannosamine monomers. In serotype A the capsule is composed of repeated units of (alpha 1-6)-linked N-acetyl-D-mannosamine-1-phosphate. In Neisseria meningitidis serogroup A, this protein is Capsular polysaccharide phosphotransferase SacB (sacB).